The primary structure comprises 246 residues: Virulence plasmid protein pGP6-D (246 aa).

This sequence belongs to the UPF0137 (pGP6-D) family.

The sequence is that of Virulence plasmid protein pGP6-D from Chlamydia muridarum (strain MoPn / Nigg).